The following is a 223-amino-acid chain: Deoxyribose-phosphate aldolase (223 aa).

Residue D89 is the Proton donor/acceptor of the active site. Residue K154 is the Schiff-base intermediate with acetaldehyde of the active site. K183 (proton donor/acceptor) is an active-site residue.

The protein belongs to the DeoC/FbaB aldolase family. DeoC type 1 subfamily.

The protein localises to the cytoplasm. The catalysed reaction is 2-deoxy-D-ribose 5-phosphate = D-glyceraldehyde 3-phosphate + acetaldehyde. Its pathway is carbohydrate degradation; 2-deoxy-D-ribose 1-phosphate degradation; D-glyceraldehyde 3-phosphate and acetaldehyde from 2-deoxy-alpha-D-ribose 1-phosphate: step 2/2. Functionally, catalyzes a reversible aldol reaction between acetaldehyde and D-glyceraldehyde 3-phosphate to generate 2-deoxy-D-ribose 5-phosphate. This Thermoanaerobacter pseudethanolicus (strain ATCC 33223 / 39E) (Clostridium thermohydrosulfuricum) protein is Deoxyribose-phosphate aldolase.